We begin with the raw amino-acid sequence, 185 residues long: Thioredoxin F2, chloroplastic (185 aa).

A Thioredoxin domain is found at 59–184 (RRIGSCVVRC…LLAAIEAARS (126 aa)). Active-site nucleophile residues include Cys-109 and Cys-112. Cys-109 and Cys-112 are joined by a disulfide. An S-glutathionyl cysteine; transient modification is found at Cys-136.

The protein belongs to the thioredoxin family. Plant F-type subfamily. Glutathionylation at Cys-136 decreases its ability to be reduced by ferredoxin-thioredoxin reductase and reduces its efficiency in activating target chloroplastic enzymes.

The protein resides in the plastid. Its subcellular location is the chloroplast stroma. In terms of biological role, probable thiol-disulfide oxidoreductase involved in the redox regulation of enzymes of both reductive pentose phosphate pathway (Calvin-Benson cycle) and oxidative pentose phosphate pathway. In Arabidopsis thaliana (Mouse-ear cress), this protein is Thioredoxin F2, chloroplastic.